A 136-amino-acid chain; its full sequence is Small ribosomal subunit protein uS19 (136 aa).

Belongs to the universal ribosomal protein uS19 family.

Functionally, protein S19 forms a complex with S13 that binds strongly to the 16S ribosomal RNA. The polypeptide is Small ribosomal subunit protein uS19 (Methanothrix thermoacetophila (strain DSM 6194 / JCM 14653 / NBRC 101360 / PT) (Methanosaeta thermophila)).